Consider the following 299-residue polypeptide: Regucalcin (299 aa).

A divalent metal cation is bound at residue glutamate 18. 3 residues coordinate substrate: arginine 101, asparagine 103, and glutamate 121. A divalent metal cation-binding residues include asparagine 154 and aspartate 204. The Proton donor/acceptor role is filled by aspartate 204. Lysine 244 and lysine 253 each carry N6-succinyllysine.

Belongs to the SMP-30/CGR1 family. In terms of assembly, monomer. The cofactor is Zn(2+). Requires Mn(2+) as cofactor. Ca(2+) is required as a cofactor. Mg(2+) serves as cofactor.

It localises to the cytoplasm. It carries out the reaction D-glucono-1,5-lactone + H2O = D-gluconate + H(+). Its pathway is cofactor biosynthesis; L-ascorbate biosynthesis via UDP-alpha-D-glucuronate pathway; L-ascorbate from UDP-alpha-D-glucuronate: step 3/4. Its function is as follows. Gluconolactonase with low activity towards other sugar lactones, including gulonolactone and galactonolactone. Catalyzes a key step in ascorbic acid (vitamin C) biosynthesis. Can also hydrolyze diisopropyl phosphorofluoridate and phenylacetate (in vitro). Calcium-binding protein. Modulates Ca(2+) signaling, and Ca(2+)-dependent cellular processes and enzyme activities. This is Regucalcin (RGN) from Bos taurus (Bovine).